Reading from the N-terminus, the 227-residue chain is LexA repressor (227 aa).

Positions 26-46 (FDEMKEALDLASKSGIHRLIT) form a DNA-binding region, H-T-H motif. Catalysis depends on for autocatalytic cleavage activity residues Ser147 and Lys185.

This sequence belongs to the peptidase S24 family. In terms of assembly, homodimer.

It carries out the reaction Hydrolysis of Ala-|-Gly bond in repressor LexA.. Represses a number of genes involved in the response to DNA damage (SOS response), including recA and lexA. In the presence of single-stranded DNA, RecA interacts with LexA causing an autocatalytic cleavage which disrupts the DNA-binding part of LexA, leading to derepression of the SOS regulon and eventually DNA repair. This chain is LexA repressor, found in Hyphomonas neptunium (strain ATCC 15444).